The sequence spans 1401 residues: Lysine-specific demethylase 6A (1401 aa).

Residues 1-1095 form an interaction with SUPT6H region; sequence MKSCGVSLAT…TNIDLSDDKK (1095 aa). TPR repeat units lie at residues 93 to 126, 130 to 163, 170 to 199, 205 to 238, 250 to 283, 284 to 317, 318 to 351, and 352 to 385; these read SDFFCQLGHFNLLLEDYPKALSAYQRYYSLQSDY, AAFLYGLGLVYFHYNAFQWAIKAFQEVLYVDPSF, HLRLGLMFKVNTDYESSLKHFQLALVDCNP, AEIQFHIAHLYETQRKYHSAKEAYEQLLQTENLS, GWMHHTVDLLGDKATKESYAIQYLQKSLEADPNS, GQSWYFLGRCYSSIGKVQDAFISYRQSIDKSEAS, ADTWCSIGVLYQQQNQPMDALQAYICAVQLDHGH, and AAAWMDLGTLYESCNQPQDAIKCYLNATRSKSCS. Over residues 437-449 the composition is skewed to polar residues; that stretch reads AMNTAQQNTSDNW. The interval 437-457 is disordered; it reads AMNTAQQNTSDNWSGGHAVSH. Residue Arg-519 is modified to Omega-N-methylarginine. Residues 521-541 form a disordered region; it reads TGIPNGPTADSSLPTNSVSGQ. The residue at position 549 (Arg-549) is an Omega-N-methylarginine. Composition is skewed to polar residues over residues 624 to 652 and 660 to 724; these read LTSSAEEPWKNQLSNSTQGLHKGQSSHSA and LSST…SGNI. Disordered regions lie at residues 624 to 746, 758 to 778, 810 to 864, 914 to 940, and 1043 to 1079; these read LTSS…SVEG, AVCSPSHGDSKSPGLLSSDNP, KTDN…ESQS, LLDKCPPPRPPSSPYPPLPKDKLNPPT, and FQESLREENEKRSHHKDHSDSESTSSDNSGRRRKGPF. Ser-769 carries the post-translational modification Phosphoserine. A compositionally biased stretch (low complexity) spans 814-833; that stretch reads SVASSPSSAISTATPSPKST. A Phosphothreonine modification is found at Thr-827. Ser-829 is modified (phosphoserine). The span at 834-848 shows a compositional bias: polar residues; that stretch reads EQTTTNSVTSLNSPH. Over residues 918-931 the composition is skewed to pro residues; sequence CPPPRPPSSPYPPL. Positions 1046–1063 are enriched in basic and acidic residues; sequence SLREENEKRSHHKDHSDS. Positions 1095-1258 constitute a JmjC domain; the sequence is KWKLQLHELT…YKLAVERYEW (164 aa). Residues His-1146, Glu-1148, and His-1226 each contribute to the Fe cation site. The Zn(2+) site is built by Cys-1331, Cys-1334, Cys-1358, and Cys-1361.

This sequence belongs to the UTX family. In terms of assembly, interacts with TLE1. Component of the MLL2/3 complex (also named ASCOM complex), at least composed of KMT2D/MLL2 or KMT2C/MLL3, ASH2L, RBBP5, WDR5, NCOA6, DPY30, KDM6A (or KDM6B), PAXIP1/PTIP, PAGR1 and alpha- and beta-tubulin. Interacts with SUPT6H. Interacts with SMARCA4. Interacts with PROSER1. It depends on L-ascorbate as a cofactor. Fe(2+) is required as a cofactor.

It is found in the nucleus. The catalysed reaction is N(6),N(6),N(6)-trimethyl-L-lysyl(27)-[histone H3] + 2 2-oxoglutarate + 2 O2 = N(6)-methyl-L-lysyl(27)-[histone H3] + 2 formaldehyde + 2 succinate + 2 CO2. Its function is as follows. Histone demethylase that specifically demethylates 'Lys-27' of histone H3, thereby playing a central role in histone code. Demethylates trimethylated and dimethylated but not monomethylated H3 'Lys-27'. Plays a central role in regulation of posterior development, by regulating HOX gene expression. Demethylation of 'Lys-27' of histone H3 is concomitant with methylation of 'Lys-4' of histone H3, and regulates the recruitment of the PRC1 complex and monoubiquitination of histone H2A. Plays a demethylase-independent role in chromatin remodeling to regulate T-box family member-dependent gene expression. The protein is Lysine-specific demethylase 6A (KDM6A) of Homo sapiens (Human).